The primary structure comprises 468 residues: Glutamate--tRNA ligase (468 aa).

The short motif at 8-18 (PSPTGFLHVGG) is the 'HIGH' region element. Zn(2+) contacts are provided by Cys-97, Cys-99, Cys-124, and Asp-126. Positions 236-240 (KLSKR) match the 'KMSKS' region motif. Lys-239 contributes to the ATP binding site.

Belongs to the class-I aminoacyl-tRNA synthetase family. Glutamate--tRNA ligase type 1 subfamily. Monomer. The cofactor is Zn(2+).

It localises to the cytoplasm. It carries out the reaction tRNA(Glu) + L-glutamate + ATP = L-glutamyl-tRNA(Glu) + AMP + diphosphate. Functionally, catalyzes the attachment of glutamate to tRNA(Glu) in a two-step reaction: glutamate is first activated by ATP to form Glu-AMP and then transferred to the acceptor end of tRNA(Glu). This chain is Glutamate--tRNA ligase, found in Francisella tularensis subsp. mediasiatica (strain FSC147).